We begin with the raw amino-acid sequence, 376 residues long: DNA-directed RNA polymerase subunit alpha (376 aa).

Positions 1–259 (MSDCSQNLLY…KHFSIFEKMD (259 aa)) are alpha N-terminal domain (alpha-NTD). Residues 276–376 (KDDILHKLVL…DKIRSKNGKG (101 aa)) form an alpha C-terminal domain (alpha-CTD) region.

This sequence belongs to the RNA polymerase alpha chain family. As to quaternary structure, homodimer. The RNAP catalytic core consists of 2 alpha, 1 beta, 1 beta' and 1 omega subunit. When a sigma factor is associated with the core the holoenzyme is formed, which can initiate transcription.

It carries out the reaction RNA(n) + a ribonucleoside 5'-triphosphate = RNA(n+1) + diphosphate. Its function is as follows. DNA-dependent RNA polymerase catalyzes the transcription of DNA into RNA using the four ribonucleoside triphosphates as substrates. This is DNA-directed RNA polymerase subunit alpha from Chlamydia abortus (strain DSM 27085 / S26/3) (Chlamydophila abortus).